The following is a 363-amino-acid chain: MLTRLFKEPSLLPDMQKFGGWVDDSGSEDSKTKDEEQERCRLGDEDLDEGSVKGGGSRAQSEIAGEEDYDEDVDEDDCGEEGDGDRPKKRGPKKRKMTPARLERSKVRRQKANARERTRMHDLNSALDNLLKVVPCYSKTQKLSKIETLRLAKNYIWALSEILRNGKRPDVVSYVQTLCKGLSQPTTNLVAGCLQLNSRNFLTEQCQEGVRFHTPTPSFSIQSYPYQCSRLSSTNCQSGSSTHSLRNHSLCSAYEALYTEGTSPEYISADFEGHHGPPVCVNGNFGVRQEEPLSPDAERGYQYSMHYTNLHGSRSSAAHGITCGPPGARSGSVHSENLPLFHDVHMHHDRTPAYEELNAFFHS.

The tract at residues 1-116 is disordered; sequence MLTRLFKEPS…VRRQKANARE (116 aa). The span at 28 to 44 shows a compositional bias: basic and acidic residues; the sequence is EDSKTKDEEQERCRLGD. Acidic residues predominate over residues 64–83; sequence AGEEDYDEDVDEDDCGEEGD. A compositionally biased stretch (basic residues) spans 87–98; the sequence is PKKRGPKKRKMT. Positions 93–99 match the Nuclear localization signal motif; the sequence is KKRKMTP. A bHLH domain is found at 107-159; that stretch reads VRRQKANARERTRMHDLNSALDNLLKVVPCYSKTQKLSKIETLRLAKNYIWAL.

Efficient DNA binding requires dimerization with another bHLH protein. In adult, expressed strongly in brain and more weakly in skin, muscle, eye and ovary.

It is found in the nucleus. Its function is as follows. Transcriptional regulator. Appears to mediate neuronal differentiation. The sequence is that of Neurogenic differentiation factor 2 from Danio rerio (Zebrafish).